Reading from the N-terminus, the 1096-residue chain is Inactive phospholipase C-like protein 1 (1096 aa).

The segment at 1–101 (MAEGAASREA…KKTVSFSSMP (101 aa)) is disordered. A compositionally biased stretch (low complexity) spans 26–41 (GADAASGDAAPEASGG). Phosphoserine is present on residues S48 and S78. The segment at 83–222 (PSNQKCGGRK…NIWVSGLRYL (140 aa)) is interaction with PPP1C. Position 94 is a phosphothreonine (T94). The residue at position 96 (S96) is a Phosphoserine. Residues 114–224 (SFMQAGCELK…WVSGLRYLVS (111 aa)) form the PH domain. The PI-PLC X-box domain occupies 399-543 (QDMTQPLSHY…LKHMIIVKGK (145 aa)). Residues 544 to 568 (KLPSESDLLEGEVTDEDEEAEMSRR) are interaction with GABA A beta subunit. A Phosphothreonine modification is found at T557. S570 bears the Phosphoserine mark. Residues 586-702 (LSDLVSICKS…GYVLRPSIMR (117 aa)) enclose the PI-PLC Y-box domain. Residues 702–831 (RDEVSYFSAN…PGYRHVPLRS (130 aa)) form the C2 domain. Positions 1040-1060 (DLLKNAKNEAVENIKQIQLAC) form a coiled coil. The segment at 1067–1096 (KGPGSAAEAKGKRSLEAIEEKESSEENGKL) is disordered. Residues 1075–1096 (AKGKRSLEAIEEKESSEENGKL) show a composition bias toward basic and acidic residues. The residue at position 1080 (S1080) is a Phosphoserine.

Belongs to the PRIP family. In terms of assembly, interacts with PPP2CA, GABA receptor beta subunits, GABA receptor gamma-2 subunits. Interacts with Ins(1,4,5)P3, Ins(1,4,5,6)P4, GABARAP, and PPP1C. May form a ternary complex with GABA receptor beta subunit and GABARAP. The formation of a ternary complex with GABA receptor beta subunit and GABARAP could be the key step for facilitating the association of GABARAP with the GABA receptor gamma-2 subunit and to allow it to be transported at the right destination. Post-translationally, phosphorylation of Thr-94 resulted in dissociation of PPP1C from PRIP1. In vitro, phosphorylated by the catalytic subunit of PKA. Expressed in brain. Found in the granular cell and Purkinje cell layers in the cerebellum; and in the hippocampal pyramidal cells, dentate granule cells and pyramidal granule cells of the cerebral cortex in the cerebrum.

Its subcellular location is the cytoplasm. Functionally, involved in an inositol phospholipid-based intracellular signaling cascade. Shows no PLC activity to phosphatidylinositol 4,5-bisphosphate and phosphatidylinositol. Component in the phospho-dependent endocytosis process of GABA A receptor. Acts as an inhibitor of PPP1C. The sequence is that of Inactive phospholipase C-like protein 1 (Plcl1) from Rattus norvegicus (Rat).